A 1258-amino-acid chain; its full sequence is Structural polyprotein (1258 aa).

Residues 41 to 75 are host transcription inhibition; that stretch reads PQAQQMQQLIAAVNTLAIRQNGTRTPGQQRRKRQP. Residues 59–114 form a disordered region; the sequence is RQNGTRTPGQQRRKRQPNKPKRKQTPPKKQNPAKTKNKQKPQPPKPKKRKPGKRER. The short motif at 68 to 109 is the Nuclear localization signal element; sequence QQRRKRQPNKPKRKQTPPKKQNPAKTKNKQKPQPPKPKKRKP. Composition is skewed to basic residues over residues 69–84 and 93–114; these read QRRKRQPNKPKRKQTP and TKNKQKPQPPKPKKRKPGKRER. The segment at 96-124 is binding to the viral RNA; the sequence is KQKPQPPKPKKRKPGKRERKCMKIENDCI. Positions 109 to 123 are ribosome-binding; the sequence is PGKRERKCMKIENDC. Cys-123 and Cys-138 are disulfide-bonded. In terms of domain architecture, Peptidase S3 spans 123–271; it reads CIFEVKLEGK…RITPEGTEEW (149 aa). Catalysis depends on His-149, which acts as the Charge relay system. Residues 154 to 164 carry the Nuclear export signal motif; the sequence is IDNPDLAKLAF. Residues 165-170 form an interaction with spike glycoprotein E2 region; it reads KKSSKY. Asp-171 serves as the catalytic Charge relay system. Residues 193–203 form a dimerization of the capsid protein region; sequence PEGHYNWHHGA. Ser-223 serves as the catalytic Charge relay system. Residues 229-233 form a dimerization of the capsid protein region; that stretch reads DNKGR. A functions as an uncleaved signal peptide for the precursor of protein E3/E2 region spans residues 272-284; the sequence is TALVTTACILSNL. 9 disulfides stabilise this stretch: Cys-279-Cys-288, Cys-293-Cys-297, Cys-296-Cys-328, Cys-356-Cys-462, Cys-359-Cys-365, Cys-428-Cys-442, Cys-490-Cys-601, Cys-538-Cys-562, and Cys-540-Cys-557. Asn-283 carries an N-linked (GlcNAc...) asparagine; by host glycan. Topologically, residues 338 to 696 are extracellular; the sequence is GLTEDYKAYK…PHEIFSYYYG (359 aa). Interaction with host Mxra8 receptor regions lie at residues 363–366 and 399–401; these read QFCY and HSW. Positions 521–524 are interaction with host Mxra8 receptor; the sequence is TGNK. A glycan (N-linked (GlcNAc...) asparagine; by host) is linked at Asn-537. Residues 553-559 are interaction with host Mxra8 receptor; the sequence is EFDNCEV. Asn-598 carries N-linked (GlcNAc...) asparagine; by host glycosylation. A helical membrane pass occupies residues 697–717; it reads LYPATTVAVCVGLACVILLAL. Residues 718-758 are Cytoplasmic-facing; it reads SASCCLCVSARNKCLTPYALTPGAVVPCTLSLLCCAPRAKA. The segment at 726-730 is interaction with the capsid protein; that stretch reads SARNK. Residues Cys-731, Cys-751, and Cys-752 are each lipidated (S-palmitoyl cysteine; by host). The segment at 731-751 is transient transmembrane before p62-6K protein processing; sequence CLTPYALTPGAVVPCTLSLLC. A disulfide bridge connects residues Cys-731 and Cys-752. Topologically, residues 759-773 are extracellular; the sequence is ATFAETAAYLWAENQ. A helical transmembrane segment spans residues 774–794; the sequence is TVFWMQFAIPVACFMIVTYCL. The Cytoplasmic segment spans residues 795-796; that stretch reads RH. A helical membrane pass occupies residues 797–817; sequence LMLCCRTASFLVAVSLGMGAT. Extracellular loops occupy residues 818-819 and 820-1234; these read QA and YEHS…HTMG. 4 disulfide bridges follow: Cys-868/Cys-933, Cys-881/Cys-913, Cys-882/Cys-915, and Cys-887/Cys-897. The segment at 903 to 920 is E1 fusion peptide loop; sequence VYPFLWGGAYCFCDSENT. N-linked (GlcNAc...) asparagine; by host glycosylation is found at Asn-960 and Asn-1089. Intrachain disulfides connect Cys-1078–Cys-1090, Cys-1120–Cys-1195, Cys-1125–Cys-1199, and Cys-1147–Cys-1189. The chain crosses the membrane as a helical span at residues 1235–1255; that stretch reads GATVVIAIGITIFLIVTCIAF. Cys-1252 carries the S-palmitoyl cysteine; by host lipid modification. Residues 1256–1258 lie on the Cytoplasmic side of the membrane; that stretch reads SRH.

As to quaternary structure, homodimer. Homomultimer. Interacts with host karyopherin KPNA4; this interaction allows the nuclear import of the viral capsid protein. Interacts with spike glycoprotein E2. Interacts with host IRAK1; the interaction leads to inhibition of IRAK1-dependent signaling. In terms of assembly, the precursor of protein E3/E2 and E1 form a heterodimer shortly after synthesis. The precursor of protein E3/E2 and E1 form a heterodimer shortly after synthesis. Processing of the precursor of protein E3/E2 into E2 and E3 results in a heterodimer of the spike glycoproteins E2 and E1. Spike at virion surface are constituted of a trimer of E2-E1 heterodimers. After target cell attachment and endocytosis, E1 change conformation to form homotrimers. Interacts with 6K protein. As to quaternary structure, interacts with spike glycoprotein E1. Processing of the precursor of protein E3/E2 into E2 and E3 results in a heterodimer of the spike glycoproteins E2 and E1. Spike at virion surface are constituted of a trimer of E2-E1 heterodimers. Interacts with 6K protein. Interacts with host MXRA8; this interaction mediates virus entry. In terms of assembly, oligomer. Interacts with spike glycoprotein E1. Interacts with spike glycoprotein E2. In terms of processing, structural polyprotein: Specific enzymatic cleavages in vivo yield mature proteins. Capsid protein is auto-cleaved during polyprotein translation, unmasking a signal peptide at the N-terminus of the precursor of E3/E2. The remaining polyprotein is then targeted to the host endoplasmic reticulum, where host signal peptidase cleaves it into pE2, 6K and E1 proteins. pE2 is further processed to mature E3 and E2 by host furin in trans-Golgi vesicle. Palmitoylated via thioester bonds. These palmitoylations may induce disruption of the C-terminus transmembrane. This would result in the reorientation of E2 C-terminus from lumenal to cytoplasmic side. Post-translationally, N-glycosylated. In terms of processing, palmitoylated via thioester bonds.

It localises to the virion. The protein localises to the host cytoplasm. The protein resides in the host cell membrane. Its subcellular location is the host nucleus. It is found in the virion membrane. It localises to the host Golgi apparatus. The protein localises to the host trans-Golgi network. The protein resides in the host endoplasmic reticulum. It catalyses the reaction Autocatalytic release of the core protein from the N-terminus of the togavirus structural polyprotein by hydrolysis of a -Trp-|-Ser- bond.. Forms an icosahedral capsid with a T=4 symmetry composed of 240 copies of the capsid protein surrounded by a lipid membrane through which penetrate 80 spikes composed of trimers of E1-E2 heterodimers. The capsid protein binds to the viral RNA genome at a site adjacent to a ribosome binding site for viral genome translation following genome release. Possesses a protease activity that results in its autocatalytic cleavage from the nascent structural protein. Following its self-cleavage, the capsid protein transiently associates with ribosomes, and within several minutes the protein binds to viral RNA and rapidly assembles into icosahedric core particles. The resulting nucleocapsid eventually associates with the cytoplasmic domain of the spike glycoprotein E2 at the cell membrane, leading to budding and formation of mature virions. In case of infection, new virions attach to target cells and after clathrin-mediated endocytosis their membrane fuses with the host endosomal membrane. This leads to the release of the nucleocapsid into the cytoplasm, followed by an uncoating event necessary for the genomic RNA to become accessible. The uncoating might be triggered by the interaction of capsid proteins with ribosomes. Binding of ribosomes would release the genomic RNA since the same region is genomic RNA-binding and ribosome-binding. Specifically inhibits interleukin-1 receptor-associated kinase 1/IRAK1-dependent signaling during viral entry, representing a means by which the alphaviruses may evade innate immune detection and activation prior to viral gene expression. In terms of biological role, provides the signal sequence for the translocation of the precursor of protein E3/E2 to the host endoplasmic reticulum. Furin-cleaved E3 remains associated with spike glycoprotein E1 and mediates pH protection of the latter during the transport via the secretory pathway. After virion release from the host cell, the assembly protein E3 is gradually released in the extracellular space. Its function is as follows. Plays a role in viral attachment to target host cell, by binding to the cell receptor MXRA8. Synthesized as a p62 precursor which is processed by furin at the cell membrane just before virion budding, giving rise to E2-E1 heterodimer. The p62-E1 heterodimer is stable, whereas E2-E1 is unstable and dissociate at low pH. p62 is processed at the last step, presumably to avoid E1 fusion activation before its final export to cell surface. E2 C-terminus contains a transitory transmembrane that would be disrupted by palmitoylation, resulting in reorientation of the C-terminal tail from lumenal to cytoplasmic side. This step is critical since E2 C-terminus is involved in budding by interacting with capsid proteins. This release of E2 C-terminus in cytoplasm occurs lately in protein export, and precludes premature assembly of particles at the endoplasmic reticulum membrane. Functionally, acts as a viroporin that participates in virus glycoprotein processing and transport to the plasma membrane, cell permeabilization and budding of viral particles. Disrupts the calcium homeostasis of the cell, probably at the endoplasmic reticulum level. This leads to cytoplasmic calcium elevation. Because of its lipophilic properties, the 6K protein is postulated to influence the selection of lipids that interact with the transmembrane domains of the glycoproteins, which, in turn, affects the deformability of the bilayer required for the extreme curvature that occurs as budding proceeds. Present in low amount in virions, about 3% compared to viral glycoproteins. Class II viral fusion protein. Fusion activity is inactive as long as E1 is bound to E2 in mature virion. After virus attachment to target cell and endocytosis, acidification of the endosome induce dissociation of E1/E2 heterodimer and concomitant trimerization of the E1 subunits. This E1 trimer is fusion active, and promotes release of viral nucleocapsid in cytoplasm after endosome and viral membrane fusion. Efficient fusion requires the presence of cholesterol and sphingolipid in the target membrane. The polypeptide is Structural polyprotein (Middelburg virus).